A 203-amino-acid chain; its full sequence is Holliday junction branch migration complex subunit RuvA (203 aa).

The segment at 1–63 (MIGKLSGRVD…EDHINLYGFL (63 aa)) is domain I. The tract at residues 64-142 (SLEEKSFFNL…KISSSSAAIK (79 aa)) is domain II. Residues 143-149 (DSLNIKG) form a flexible linker region. The segment at 150 to 203 (ITPVASSEVIKALINMGFSRFEAQNAVQEIITKNPEISIDELIRTALKNRNSNF) is domain III.

Belongs to the RuvA family. As to quaternary structure, homotetramer. Forms an RuvA(8)-RuvB(12)-Holliday junction (HJ) complex. HJ DNA is sandwiched between 2 RuvA tetramers; dsDNA enters through RuvA and exits via RuvB. An RuvB hexamer assembles on each DNA strand where it exits the tetramer. Each RuvB hexamer is contacted by two RuvA subunits (via domain III) on 2 adjacent RuvB subunits; this complex drives branch migration. In the full resolvosome a probable DNA-RuvA(4)-RuvB(12)-RuvC(2) complex forms which resolves the HJ.

It localises to the cytoplasm. Functionally, the RuvA-RuvB-RuvC complex processes Holliday junction (HJ) DNA during genetic recombination and DNA repair, while the RuvA-RuvB complex plays an important role in the rescue of blocked DNA replication forks via replication fork reversal (RFR). RuvA specifically binds to HJ cruciform DNA, conferring on it an open structure. The RuvB hexamer acts as an ATP-dependent pump, pulling dsDNA into and through the RuvAB complex. HJ branch migration allows RuvC to scan DNA until it finds its consensus sequence, where it cleaves and resolves the cruciform DNA. The sequence is that of Holliday junction branch migration complex subunit RuvA from Rickettsia bellii (strain OSU 85-389).